The chain runs to 412 residues: 4-hydroxy-3-methylbut-2-en-1-yl diphosphate synthase (ferredoxin) (412 aa).

The span at 1–12 (MQTLDRPNAPSQ) shows a compositional bias: polar residues. The disordered stretch occupies residues 1 to 22 (MQTLDRPNAPSQQPYPEPVYPR). [4Fe-4S] cluster-binding residues include C314, C317, C348, and E355.

It belongs to the IspG family. The cofactor is [4Fe-4S] cluster.

The enzyme catalyses (2E)-4-hydroxy-3-methylbut-2-enyl diphosphate + 2 oxidized [2Fe-2S]-[ferredoxin] + H2O = 2-C-methyl-D-erythritol 2,4-cyclic diphosphate + 2 reduced [2Fe-2S]-[ferredoxin] + H(+). Its pathway is isoprenoid biosynthesis; isopentenyl diphosphate biosynthesis via DXP pathway; isopentenyl diphosphate from 1-deoxy-D-xylulose 5-phosphate: step 5/6. Converts 2C-methyl-D-erythritol 2,4-cyclodiphosphate (ME-2,4cPP) into 1-hydroxy-2-methyl-2-(E)-butenyl 4-diphosphate. The sequence is that of 4-hydroxy-3-methylbut-2-en-1-yl diphosphate synthase (ferredoxin) from Synechococcus sp. (strain JA-3-3Ab) (Cyanobacteria bacterium Yellowstone A-Prime).